Reading from the N-terminus, the 1029-residue chain is Kinesin-like protein KIF17 (1029 aa).

In terms of domain architecture, Kinesin motor spans 5–335 (AVKVVVRCRP…LRYANRAKNI (331 aa)). 91–98 (GQTGSGKS) provides a ligand contact to ATP. Residues 346 to 462 (KDALLREYQE…EENLRKETEA (117 aa)) are a coiled coil. Disordered stretches follow at residues 523 to 569 (ELPK…MPTE) and 647 to 673 (VPAPTDLLEPSDARPEAEAADDFPPRP). Residues 532–551 (SEISLGSSESSSLEETSVSE) show a composition bias toward low complexity. Basic and acidic residues predominate over residues 657-673 (SDARPEAEAADDFPPRP). A coiled-coil region spans residues 739–846 (QQVLARLQLL…QLEKIDYLAT (108 aa)). Disordered regions lie at residues 908–931 (AVSTGPQNKPARKTSAADNGEPNM) and 968–1029 (KSLT…SEPL).

The protein belongs to the TRAFAC class myosin-kinesin ATPase superfamily. Kinesin family. As to quaternary structure, homodimer. Interacts with APBA1 (via PDZ domain); the interaction is direct and is required for association of KIF17 with the cargo that is to be transported. Interacts with IFT B complex components IFT52 and IFT57. Interacts with IFT70B. Interacts with PIWIL1. Interacts with TBATA.

The protein resides in the cytoplasm. It is found in the cytoskeleton. It localises to the cell projection. Its subcellular location is the cilium. The protein localises to the dendrite. Functionally, dendrite-specific motor protein which, in association with the Apba1-containing complex (LIN-10-LIN-2-LIN-7 complex), transports vesicles containing N-methyl-D-aspartate (NMDA) receptor subunit NR2B along microtubules. The chain is Kinesin-like protein KIF17 (KIF17) from Homo sapiens (Human).